Reading from the N-terminus, the 251-residue chain is tRNA (guanine-N(1)-)-methyltransferase (251 aa).

S-adenosyl-L-methionine is bound by residues G113 and 133 to 138 (MGDYVL).

This sequence belongs to the RNA methyltransferase TrmD family. As to quaternary structure, homodimer.

Its subcellular location is the cytoplasm. The catalysed reaction is guanosine(37) in tRNA + S-adenosyl-L-methionine = N(1)-methylguanosine(37) in tRNA + S-adenosyl-L-homocysteine + H(+). Functionally, specifically methylates guanosine-37 in various tRNAs. The chain is tRNA (guanine-N(1)-)-methyltransferase from Sodalis glossinidius (strain morsitans).